A 295-amino-acid chain; its full sequence is Probable WRKY transcription factor 46 (295 aa).

The segment at residues 98–166 (QENGSIDDGH…YLGNHTCNNI (69 aa)) is a DNA-binding region (WRKY).

Belongs to the WRKY group III family. As to quaternary structure, binds to BZR2/BES1 to cooperatively regulate the expression of target genes. In terms of processing, phosphorylated and destabilized by ASK7/BIN2. Expressed in guard cells, hypocotyls, and in the vascular tissues of cotyledon and root. Mostly expressed in roots, at lower levels in leaves and petioles, and, to a lower extent, in stems, flowers and siliques.

The protein resides in the nucleus. Its function is as follows. Transcription factor involved in the regulation of osmotic stress responses and stomatal movement. Interacts specifically with the W box (5'-(T)TGAC[CT]-3'), a frequently occurring elicitor-responsive cis-acting element. Positive regulator of EDS1-dependent defense against E.amylovora. Together with WRKY70 and WRKY53, promotes resistance to P.syringae, probably by enhancing salicylic acid (SA)- dependent genes. Contributes to the suppression of jasmonic acid (MeJA)-induced expression of PDF1.2. Together with WRKY54 and WRKY70, promotes brassinosteroid (BR)-regulated plant growth but prevent drought response by modulating gene expression. The chain is Probable WRKY transcription factor 46 (WRKY46) from Arabidopsis thaliana (Mouse-ear cress).